The following is a 216-amino-acid chain: uncharacterized protein (216 aa).

4Fe-4S ferredoxin-type domains are found at residues 160 to 189 (DDKPINDEFCTGCGTCVAKCPANALTIDEK) and 188 to 216 (EKPKVNISKCIKCGTCFFNCIRVKEALLP). [4Fe-4S] cluster contacts are provided by Cys169, Cys172, Cys175, Cys179, Cys197, Cys200, Cys203, and Cys207.

Belongs to the FrhG family.

This is an uncharacterized protein from Methanocaldococcus jannaschii (strain ATCC 43067 / DSM 2661 / JAL-1 / JCM 10045 / NBRC 100440) (Methanococcus jannaschii).